We begin with the raw amino-acid sequence, 398 residues long: Nucleotide-sugar uncharacterized transporter 2 (398 aa).

Transmembrane regions (helical) follow at residues 54–74, 84–104, 119–139, 150–170, 179–199, 201–221, 242–262, 271–291, 299–319, and 322–342; these read FCGPVVAMSFNFVVAVGIILA, FNFPIFLTLIHYTVAWILLAF, TTPFSSLFSLGAVMAFASGLA, FYQMAKIAVTPTIVLAEFVLF, VMALAVVSLGVAIATVTDLEF, LFGALVAVAWIIPSAINKILW, FTVFFLLALMPWLDPPGVLLF, AILISALLGFLLQWSGALALG, VVLGQFKTCVILLGGYVIFGS, and GFISICGAIAALGGMSVYTWL.

It belongs to the TPT transporter family. TPT (TC 2.A.7.9) subfamily.

The protein localises to the membrane. The polypeptide is Nucleotide-sugar uncharacterized transporter 2 (Arabidopsis thaliana (Mouse-ear cress)).